The primary structure comprises 316 residues: Aspartate carbamoyltransferase catalytic subunit (316 aa).

Arg66 and Thr67 together coordinate carbamoyl phosphate. An L-aspartate-binding site is contributed by Lys94. 3 residues coordinate carbamoyl phosphate: Arg116, His146, and Gln149. Positions 180 and 235 each coordinate L-aspartate. Residues Gly276 and Pro277 each coordinate carbamoyl phosphate.

The protein belongs to the aspartate/ornithine carbamoyltransferase superfamily. ATCase family. Heterododecamer (2C3:3R2) of six catalytic PyrB chains organized as two trimers (C3), and six regulatory PyrI chains organized as three dimers (R2).

The enzyme catalyses carbamoyl phosphate + L-aspartate = N-carbamoyl-L-aspartate + phosphate + H(+). The protein operates within pyrimidine metabolism; UMP biosynthesis via de novo pathway; (S)-dihydroorotate from bicarbonate: step 2/3. Catalyzes the condensation of carbamoyl phosphate and aspartate to form carbamoyl aspartate and inorganic phosphate, the committed step in the de novo pyrimidine nucleotide biosynthesis pathway. The polypeptide is Aspartate carbamoyltransferase catalytic subunit (Stenotrophomonas maltophilia (strain K279a)).